Consider the following 193-residue polypeptide: ATP-dependent Clp protease proteolytic subunit (193 aa).

Serine 98 (nucleophile) is an active-site residue. The active site involves histidine 123.

Belongs to the peptidase S14 family. As to quaternary structure, fourteen ClpP subunits assemble into 2 heptameric rings which stack back to back to give a disk-like structure with a central cavity, resembling the structure of eukaryotic proteasomes.

It localises to the cytoplasm. It carries out the reaction Hydrolysis of proteins to small peptides in the presence of ATP and magnesium. alpha-casein is the usual test substrate. In the absence of ATP, only oligopeptides shorter than five residues are hydrolyzed (such as succinyl-Leu-Tyr-|-NHMec, and Leu-Tyr-Leu-|-Tyr-Trp, in which cleavage of the -Tyr-|-Leu- and -Tyr-|-Trp bonds also occurs).. Cleaves peptides in various proteins in a process that requires ATP hydrolysis. Has a chymotrypsin-like activity. Plays a major role in the degradation of misfolded proteins. This chain is ATP-dependent Clp protease proteolytic subunit, found in Lachnospira eligens (strain ATCC 27750 / DSM 3376 / VPI C15-48 / C15-B4) (Eubacterium eligens).